The following is a 760-amino-acid chain: Cellulose synthase-like protein G1 (760 aa).

2 consecutive transmembrane segments (helical) span residues isoleucine 28 to leucine 48 and threonine 54 to threonine 74. Catalysis depends on residues aspartate 142 and aspartate 447. 5 consecutive transmembrane segments (helical) span residues isoleucine 530–phenylalanine 550, phenylalanine 558–leucine 578, leucine 593–leucine 613, valine 656–glycine 676, and leucine 680–valine 700.

It belongs to the glycosyltransferase 2 family. Plant cellulose synthase-like G subfamily. As to expression, expressed in young seedlings, primarily in the vascular tissue.

It localises to the golgi apparatus membrane. Thought to be a Golgi-localized beta-glycan synthase that polymerize the backbones of noncellulosic polysaccharides (hemicelluloses) of plant cell wall. This is Cellulose synthase-like protein G1 (CSLG1) from Arabidopsis thaliana (Mouse-ear cress).